A 418-amino-acid chain; its full sequence is STE20-related kinase adapter protein beta (418 aa).

Positions 58 to 369 constitute a Protein kinase domain; it reads YELQVEIGRG…ASSLLSHVFF (312 aa). ATP contacts are provided by residues 64 to 72 and K89; that span reads IGRGFDNLT.

It belongs to the protein kinase superfamily. STE Ser/Thr protein kinase family. STE20 subfamily. Component of a trimeric complex composed of STK11/LKB1, STRAD (STRADA or STRADB) and CAB39/MO25 (CAB39/MO25alpha or CAB39L/MO25beta): the complex tethers STK11/LKB1 in the cytoplasm and stimulates its catalytic activity. Interacts with BIRC4/XIAP. These two proteins are likely to coexist in a complex with TAK1, TRAF6, TAB1 and TAB2. In terms of tissue distribution, highly expressed in heart, skeletal muscle, testis, liver and colon.

The protein resides in the nucleus. The protein localises to the cytoplasm. Its function is as follows. Pseudokinase which, in complex with CAB39/MO25 (CAB39/MO25alpha or CAB39L/MO25beta), binds to and activates STK11/LKB1. Adopts a closed conformation typical of active protein kinases and binds STK11/LKB1 as a pseudosubstrate, promoting conformational change of STK11/LKB1 in an active conformation. The sequence is that of STE20-related kinase adapter protein beta (STRADB) from Homo sapiens (Human).